Reading from the N-terminus, the 266-residue chain is Transmembrane domain-containing protein TMIGD3 (266 aa).

Residues 1 to 20 (MEGSPAGPIEQKEARWESSW) are disordered. A helical membrane pass occupies residues 55-75 (FLPVMWLFILLSLALISDAMV). Residue asparagine 192 is glycosylated (N-linked (GlcNAc...) asparagine). The chain crosses the membrane as a helical span at residues 213–233 (ILIICILITGLGIISVISHLT).

Expressed in the lung and bone. Expressed at lower levels in osteosarcoma tissues (at protein level).

The protein localises to the membrane. Functionally, plays a suppressive role in osteosarcoma malignancy by inhibiting NF-kappa-B activity. This is Transmembrane domain-containing protein TMIGD3 from Homo sapiens (Human).